Here is an 86-residue protein sequence, read N- to C-terminus: Muscarinic toxin-like protein (86 aa).

The first 21 residues, 1 to 21 (MKTLLLTLAVVTMVCMDLGYT), serve as a signal peptide directing secretion. 4 disulfides stabilise this stretch: Cys-24–Cys-45, Cys-38–Cys-62, Cys-66–Cys-78, and Cys-79–Cys-84.

It belongs to the three-finger toxin family. Short-chain subfamily. Orphan group VIII (haditoxin) sub-subfamily. Homodimer; non-covalently linked. As to expression, expressed by the venom gland.

The protein resides in the secreted. Functionally, antagonist of muscle and neuronal nicotinic acetylcholine receptors (nAChR) with highest affinity for neuronal alpha-7/CHRNA7 nAChRs. The chain is Muscarinic toxin-like protein from Bungarus multicinctus (Many-banded krait).